Reading from the N-terminus, the 201-residue chain is MSAKLERLSQTLRDVLGDVVESLVVDRGEVTIEVAAGNFLDVARRLRDEAALGFEQLMDISGIDYSAFGNGAWQGKRFASVAHLLSVKNNWRLRLRVFADDDDFPVLGSLVEVWPSANWFEREAFDLYGILYAGHPDLRRILTDYGFVGHPFRKDFPISGYVEMRYDPEQGRVVYQPVTIEPRENTPRIVREENYGDVGHG.

It belongs to the complex I 30 kDa subunit family. In terms of assembly, NDH-1 is composed of 14 different subunits. Subunits NuoB, C, D, E, F, and G constitute the peripheral sector of the complex.

The protein resides in the cell inner membrane. It carries out the reaction a quinone + NADH + 5 H(+)(in) = a quinol + NAD(+) + 4 H(+)(out). Functionally, NDH-1 shuttles electrons from NADH, via FMN and iron-sulfur (Fe-S) centers, to quinones in the respiratory chain. The immediate electron acceptor for the enzyme in this species is believed to be ubiquinone. Couples the redox reaction to proton translocation (for every two electrons transferred, four hydrogen ions are translocated across the cytoplasmic membrane), and thus conserves the redox energy in a proton gradient. The sequence is that of NADH-quinone oxidoreductase subunit C from Azoarcus sp. (strain BH72).